A 179-amino-acid polypeptide reads, in one-letter code: Diphosphoinositol polyphosphate phosphohydrolase 2 (179 aa).

Substrate is bound by residues Arg-9, 17–19, and 38–40; these read KKR and SSR. One can recognise a Nudix hydrolase domain in the interval 17-143; that stretch reads KKRAACLCFR…VHAEYLERLK (127 aa). Residues Gly-49 and Glu-65 each coordinate Mg(2+). A Nudix box motif is present at residues 50–71; sequence GGVEPEEEPGGAAAREVYEEAG. Glu-68 serves as the catalytic Proton acceptor. Glu-69 contacts Mg(2+). Substrate-binding positions include 88–90, Arg-114, and Lys-132; that span reads RKH.

This sequence belongs to the Nudix hydrolase family. DIPP subfamily. Mg(2+) serves as cofactor. It depends on Mn(2+) as a cofactor.

It is found in the cytoplasm. The enzyme catalyses diphospho-myo-inositol polyphosphate + H2O = myo-inositol polyphosphate + phosphate.. It catalyses the reaction 5-diphospho-1D-myo-inositol 1,2,3,4,6-pentakisphosphate + H2O = 1D-myo-inositol hexakisphosphate + phosphate + H(+). The catalysed reaction is 3,5-bis(diphospho)-1D-myo-inositol 1,2,4,6-tetrakisphosphate + H2O = 3-diphospho-1D-myo-inositol 1,2,4,5,6-pentakisphosphate + phosphate + 2 H(+). It carries out the reaction 5-diphospho-1D-myo-inositol 1,3,4,6-tetrakisphosphate + H2O = 1D-myo-inositol 1,3,4,5,6-pentakisphosphate + phosphate + H(+). The enzyme catalyses P(1),P(6)-bis(5'-adenosyl) hexaphosphate + H2O = 2 ATP + 2 H(+). It catalyses the reaction P(1),P(5)-bis(5'-adenosyl) pentaphosphate + H2O = ADP + ATP + 2 H(+). The catalysed reaction is 5-phospho-alpha-D-ribose 1-diphosphate + H2O = alpha-D-ribose 1,5-bisphosphate + phosphate + H(+). Cleaves the beta-phosphate from diphosphoinositol polyphosphates such as PP-InsP5 (diphosphoinositol pentakisphosphate), PP-InsP4 (diphosphoinositol tetrakisphosphate) and [PP]2-InsP4 (bisdiphosphoinositol tetrakisphosphate), suggesting that it may play a role in signal transduction. Diadenosine polyphosphates, particularly Ap6A (P(1),P(6)-bis(5a-adenosyl) hexaphosphate) and Ap5A (P(1),P(5)-bis(5'-adenosyl) pentaphosphate) are downstream effectors of a signaling cascade that regulates cardiac KATP channels, can also be substrates, although with lower preference than the diphosphoinositol polyphosphates. Can also catalyze the hydrolysis of 5-phosphoribose 1-diphosphate, generating the glycolytic activator ribose 1,5-bisphosphate. Does not play a role in U8 snoRNA decapping activity. Binds U8 snoRNA. In Rattus norvegicus (Rat), this protein is Diphosphoinositol polyphosphate phosphohydrolase 2.